The chain runs to 601 residues: ATP-dependent lipid A-core flippase (601 aa).

Positions 28-328 (LLSVVGLIVY…LTRVNAEFQR (301 aa)) constitute an ABC transmembrane type-1 domain. The next 6 membrane-spanning stretches (helical) occupy residues 32–52 (VGLI…GPFI), 81–101 (VLLM…FANF), 160–180 (ALIS…LMFY), 183–203 (WKLS…ITIV), 267–287 (AVSQ…VLYA), and 296–316 (DLTA…LQPI). The region spanning 360 to 597 (LRFDNVSFSY…GGMYAKLYQM (238 aa)) is the ABC transporter domain. 394-401 (GRSGSGKS) contributes to the ATP binding site.

This sequence belongs to the ABC transporter superfamily. Lipid exporter (TC 3.A.1.106) family. Homodimer.

The protein resides in the cell inner membrane. The catalysed reaction is ATP + H2O + lipid A-core oligosaccharideSide 1 = ADP + phosphate + lipid A-core oligosaccharideSide 2.. In terms of biological role, involved in lipopolysaccharide (LPS) biosynthesis. Translocates lipid A-core from the inner to the outer leaflet of the inner membrane. Transmembrane domains (TMD) form a pore in the inner membrane and the ATP-binding domain (NBD) is responsible for energy generation. The protein is ATP-dependent lipid A-core flippase of Shewanella oneidensis (strain ATCC 700550 / JCM 31522 / CIP 106686 / LMG 19005 / NCIMB 14063 / MR-1).